The chain runs to 382 residues: Homoserine O-acetyltransferase (382 aa).

Residues 1-20 (MSTDQSPCPSATGAELLPPP) are disordered. One can recognise an AB hydrolase-1 domain in the interval 59–363 (NVVLVEHALT…RDGHDGFLTE (305 aa)). S164 acts as the Nucleophile in catalysis. R234 is a binding site for substrate. Residues D327 and H357 contribute to the active site. D358 is a binding site for substrate.

It belongs to the AB hydrolase superfamily. MetX family. Homodimer.

The protein localises to the cytoplasm. The enzyme catalyses L-homoserine + acetyl-CoA = O-acetyl-L-homoserine + CoA. It participates in amino-acid biosynthesis; L-methionine biosynthesis via de novo pathway; O-acetyl-L-homoserine from L-homoserine: step 1/1. Transfers an acetyl group from acetyl-CoA to L-homoserine, forming acetyl-L-homoserine. This Nocardia farcinica (strain IFM 10152) protein is Homoserine O-acetyltransferase.